A 144-amino-acid chain; its full sequence is MRLNTLSPAAGSKSAPKRVGRGIGSGLGKTAGRGHKGQKSRSGGGVRVGFEGGQMPLKIRLPKFGFTSRRALVTAEVRLLELAKVNGDVVDLNALKDANVITRNIQFAKIVLSGTIDRPVTVKGLKVTKGARAAIEAAGGKIEE.

The disordered stretch occupies residues 1–49 (MRLNTLSPAAGSKSAPKRVGRGIGSGLGKTAGRGHKGQKSRSGGGVRVG). Positions 21 to 31 (RGIGSGLGKTA) are enriched in gly residues.

This sequence belongs to the universal ribosomal protein uL15 family. Part of the 50S ribosomal subunit.

Binds to the 23S rRNA. In Shewanella frigidimarina (strain NCIMB 400), this protein is Large ribosomal subunit protein uL15.